The following is a 158-amino-acid chain: 2-C-methyl-D-erythritol 2,4-cyclodiphosphate synthase (158 aa).

A divalent metal cation contacts are provided by D9 and H11. Residues 9 to 11 (DVH) and 35 to 36 (HS) contribute to the 4-CDP-2-C-methyl-D-erythritol 2-phosphate site. H43 is an a divalent metal cation binding site. Residues 57–59 (DIG), 62–66 (FPDTD), 101–107 (AQKPKMA), 133–136 (TTTE), F140, and R143 each bind 4-CDP-2-C-methyl-D-erythritol 2-phosphate.

It belongs to the IspF family. Homotrimer. A divalent metal cation is required as a cofactor.

It catalyses the reaction 4-CDP-2-C-methyl-D-erythritol 2-phosphate = 2-C-methyl-D-erythritol 2,4-cyclic diphosphate + CMP. The protein operates within isoprenoid biosynthesis; isopentenyl diphosphate biosynthesis via DXP pathway; isopentenyl diphosphate from 1-deoxy-D-xylulose 5-phosphate: step 4/6. Involved in the biosynthesis of isopentenyl diphosphate (IPP) and dimethylallyl diphosphate (DMAPP), two major building blocks of isoprenoid compounds. Catalyzes the conversion of 4-diphosphocytidyl-2-C-methyl-D-erythritol 2-phosphate (CDP-ME2P) to 2-C-methyl-D-erythritol 2,4-cyclodiphosphate (ME-CPP) with a corresponding release of cytidine 5-monophosphate (CMP). The chain is 2-C-methyl-D-erythritol 2,4-cyclodiphosphate synthase from Bacillus licheniformis (strain ATCC 14580 / DSM 13 / JCM 2505 / CCUG 7422 / NBRC 12200 / NCIMB 9375 / NCTC 10341 / NRRL NRS-1264 / Gibson 46).